The primary structure comprises 328 residues: tRNA methyltransferase 10 homolog A (328 aa).

Disordered regions lie at residues 1-91 (MSSE…RKRV) and 281-328 (HKAC…PVLQ). At S22 the chain carries Phosphoserine. The stretch at 43-83 (RQLKKLMKQKQWEEQREQRKEKRKEKRKRKKLERRQLESNS) forms a coiled coil. Residues 52–62 (KQWEEQREQRK) are compositionally biased toward basic and acidic residues. The segment covering 63–75 (EKRKEKRKRKKLE) has biased composition (basic residues). The SAM-dependent MTase TRM10-type domain maps to 88–278 (RKRVRRDVAR…TILPQRKGAV (191 aa)). A compositionally biased stretch (basic and acidic residues) spans 305 to 319 (ESCRDNPDSPQKDEQ).

It belongs to the class IV-like SAM-binding methyltransferase superfamily. TRM10 family. Interacts with tRNA.

It is found in the nucleus. The protein resides in the nucleolus. It carries out the reaction guanosine(9) in tRNA + S-adenosyl-L-methionine = N(1)-methylguanosine(9) in tRNA + S-adenosyl-L-homocysteine + H(+). Its function is as follows. S-adenosyl-L-methionine-dependent guanine N(1)-methyltransferase that catalyzes the formation of N(1)-methylguanine at position 9 (m1G9) in tRNAs. Probably not able to catalyze formation of N(1)-methyladenine at position 9 (m1A9) in tRNAs. The sequence is that of tRNA methyltransferase 10 homolog A (Trmt10a) from Mus musculus (Mouse).